Consider the following 342-residue polypeptide: Nucleoid-associated protein Spea_1765 (342 aa).

It belongs to the YejK family.

The protein resides in the cytoplasm. Its subcellular location is the nucleoid. This is Nucleoid-associated protein Spea_1765 from Shewanella pealeana (strain ATCC 700345 / ANG-SQ1).